Consider the following 460-residue polypeptide: ATP synthase subunit beta (460 aa).

150–157 contributes to the ATP binding site; it reads GGAGVGKT.

The protein belongs to the ATPase alpha/beta chains family. As to quaternary structure, F-type ATPases have 2 components, CF(1) - the catalytic core - and CF(0) - the membrane proton channel. CF(1) has five subunits: alpha(3), beta(3), gamma(1), delta(1), epsilon(1). CF(0) has three main subunits: a(1), b(2) and c(9-12). The alpha and beta chains form an alternating ring which encloses part of the gamma chain. CF(1) is attached to CF(0) by a central stalk formed by the gamma and epsilon chains, while a peripheral stalk is formed by the delta and b chains.

The protein localises to the cell inner membrane. It carries out the reaction ATP + H2O + 4 H(+)(in) = ADP + phosphate + 5 H(+)(out). Its function is as follows. Produces ATP from ADP in the presence of a proton gradient across the membrane. The catalytic sites are hosted primarily by the beta subunits. This Salmonella gallinarum (strain 287/91 / NCTC 13346) protein is ATP synthase subunit beta.